The sequence spans 914 residues: Protein translocase subunit SecA (914 aa).

ATP is bound by residues Q87, 105 to 109, and D508; that span reads GEGKT. Zn(2+) contacts are provided by C898, C900, C909, and H910.

Belongs to the SecA family. Monomer and homodimer. Part of the essential Sec protein translocation apparatus which comprises SecA, SecYEG and auxiliary proteins SecDF-YajC and YidC. It depends on Zn(2+) as a cofactor.

The protein resides in the cell inner membrane. It is found in the cytoplasm. It catalyses the reaction ATP + H2O + cellular proteinSide 1 = ADP + phosphate + cellular proteinSide 2.. In terms of biological role, part of the Sec protein translocase complex. Interacts with the SecYEG preprotein conducting channel. Has a central role in coupling the hydrolysis of ATP to the transfer of proteins into and across the cell membrane, serving both as a receptor for the preprotein-SecB complex and as an ATP-driven molecular motor driving the stepwise translocation of polypeptide chains across the membrane. In Xylella fastidiosa (strain M23), this protein is Protein translocase subunit SecA.